Here is a 142-residue protein sequence, read N- to C-terminus: UPF0332 protein PH1297 (142 aa).

Belongs to the UPF0332 family.

In Pyrococcus horikoshii (strain ATCC 700860 / DSM 12428 / JCM 9974 / NBRC 100139 / OT-3), this protein is UPF0332 protein PH1297.